A 711-amino-acid polypeptide reads, in one-letter code: Amino-acid racemase (711 aa).

The Cytoplasmic segment spans residues Met1 to Arg14. A helical transmembrane segment spans residues Phe15 to Thr35. Residues Gly36–Asn37 lie on the Extracellular side of the membrane. Residues Phe38–Phe58 form a helical membrane-spanning segment. At Phe59–Thr78 the chain is on the cytoplasmic side. The helical transmembrane segment at Thr79–Phe99 threads the bilayer. Residues Lys100–Thr117 lie on the Extracellular side of the membrane. Residues Leu118–Val138 form a helical membrane-spanning segment. Residues Lys139–Ala146 lie on the Cytoplasmic side of the membrane. Residues Phe147–Val167 form a helical membrane-spanning segment. Residues Lys168–Arg188 lie on the Extracellular side of the membrane. A helical transmembrane segment spans residues Asn189 to Asn209. At Arg210–His241 the chain is on the cytoplasmic side. Residues Asp242–Phe262 form a helical membrane-spanning segment. Residues Arg263–Ser306 lie on the Extracellular side of the membrane. Residues Leu307–Leu327 form a helical membrane-spanning segment. The Cytoplasmic segment spans residues Leu328–Ala711. The segment at Ala336–Ala711 is racemase. Catalysis depends on Lys376, which acts as the Proton acceptor. At Lys376 the chain carries N6-(pyridoxal phosphate)lysine. Position 470 (Arg470) interacts with substrate. Residue Tyr602 is the Proton acceptor of the active site. Met651 contacts substrate.

It in the N-terminal section; belongs to the acyltransferase 3 family. The protein in the C-terminal section; belongs to the alanine racemase family. It depends on pyridoxal 5'-phosphate as a cofactor.

The protein resides in the cell membrane. The protein is Amino-acid racemase (vanTG) of Enterococcus faecalis (Streptococcus faecalis).